The primary structure comprises 156 residues: UPF0266 membrane protein NT01EI_1718 (156 aa).

A run of 3 helical transmembrane segments spans residues 6–26 (IALL…EAIM), 46–63 (DSLI…RNIS), and 67–87 (APFT…IFYL).

It belongs to the UPF0266 family.

It is found in the cell inner membrane. The polypeptide is UPF0266 membrane protein NT01EI_1718 (Edwardsiella ictaluri (strain 93-146)).